The primary structure comprises 430 residues: MAMATRTLGFVLPTSLSSQPSFDRRGGGFRVSVIRCSTSPLTFPTSGVVEKPWTSYNARLVLEDGSIWPAKSFGAPGTRIAELVFNTSLTGYQEILTDPSYAGQFVLMTNPQIGNTGVNPDDEESGQCFLTGLVIRNLSISTSNWRCTKTLADYLTERDIMGVYDLDTRAITRRLREDGSLIGVLSTEQSKTDDELLQMSRSWDIVGIDLISDVSCKSPYEWVDKTNAEWDFNTNSRDGKSYKVIAYDFGIKQNILRRLSSYGCQITVVPSTFPAAEALKMNPDGILFSNGPGDPSAVPYAVETVKELLGKVPVYGICMGHQLLGQALGGKTFKMKFGHHGGNHPVRNNRTGQVEISAQNHNYAVDPASLPGGVEVTHVNLNDGSCAGLSFPEMNVMSLQYHPEASPGPHDSDNAFREFIELMKRSKQSS.

A chloroplast-targeting transit peptide spans 1-35 (MAMATRTLGFVLPTSLSSQPSFDRRGGGFRVSVIR). A Glutamine amidotransferase type-1 domain is found at 243-429 (KVIAYDFGIK…IELMKRSKQS (187 aa)). Catalysis depends on Cys318, which acts as the Nucleophile. Active-site residues include His402 and Glu404.

Belongs to the CarA family. Heterodimer composed of 2 chains; the small (or glutamine) chain promotes the hydrolysis of glutamine to ammonia, which is used by the large (or ammonia) chain to synthesize carbamoyl phosphate.

The protein resides in the plastid. Its subcellular location is the chloroplast. The catalysed reaction is hydrogencarbonate + L-glutamine + 2 ATP + H2O = carbamoyl phosphate + L-glutamate + 2 ADP + phosphate + 2 H(+). It catalyses the reaction L-glutamine + H2O = L-glutamate + NH4(+). The protein operates within amino-acid biosynthesis; L-arginine biosynthesis; carbamoyl phosphate from bicarbonate: step 1/1. It participates in pyrimidine metabolism; UMP biosynthesis via de novo pathway; (S)-dihydroorotate from bicarbonate: step 1/3. Functionally, small subunit of the arginine-specific carbamoyl phosphate synthase (CPSase). CPSase catalyzes the formation of carbamoyl phosphate from the ammonia moiety of glutamine, carbonate, and phosphate donated by ATP, the first step of the arginine biosynthetic pathway. The small subunit (glutamine amidotransferase) binds and cleaves glutamine to supply the large subunit with the substrate ammonia. The chain is Carbamoyl phosphate synthase small chain, chloroplastic (CARA) from Arabidopsis thaliana (Mouse-ear cress).